The chain runs to 399 residues: Forkhead box protein A4 (399 aa).

Residues 119–213 constitute a DNA-binding region (fork-head); it reads KPPYSYISLI…ENGCYLRRQK (95 aa). Residues 219–234 show a composition bias toward basic and acidic residues; the sequence is RSKSGEREKKVNKPGD. Residues 219–290 are disordered; that stretch reads RSKSGEREKK…VGLSPTSEQA (72 aa). Over residues 267–277 the composition is skewed to polar residues; sequence STGSSIHQASG.

The protein localises to the nucleus. Functionally, transcriptional repressor involved in embryonic nervous system development. Plays a role in the induction and patterning of the anterior-posterior neural axis. Involved in the establishment of floor plate differentiation from neural plate cells during gastrulation. Binds the anf1 promoter sequence to restrict expression of anf1 to the anterior of the neural plate, thereby patterning the forebrain. Can bind to the HNF-3-alpha DNA target sequence. Cooperates with t/bra in a dose-dependent manner to specify dorsal mesoderm formation, including notochord. May be involved in the dorso-ventral patterning of the mesoderm. Binds to DNA via the target sequence 5'-[GA]TAAA[TC]A-3', with 5'-GTAAATA-3' being the preferred binding site. The polypeptide is Forkhead box protein A4 (Xenopus tropicalis (Western clawed frog)).